We begin with the raw amino-acid sequence, 201 residues long: Urease accessory protein UreG (201 aa).

11–18 (GPVGSGKT) is a binding site for GTP.

The protein belongs to the SIMIBI class G3E GTPase family. UreG subfamily. As to quaternary structure, homodimer. UreD, UreF and UreG form a complex that acts as a GTP-hydrolysis-dependent molecular chaperone, activating the urease apoprotein by helping to assemble the nickel containing metallocenter of UreC. The UreE protein probably delivers the nickel.

Its subcellular location is the cytoplasm. In terms of biological role, facilitates the functional incorporation of the urease nickel metallocenter. This process requires GTP hydrolysis, probably effectuated by UreG. The sequence is that of Urease accessory protein UreG from Prochlorococcus marinus subsp. pastoris (strain CCMP1986 / NIES-2087 / MED4).